The primary structure comprises 407 residues: Imidazolonepropionase (407 aa).

Histidine 73 and histidine 75 together coordinate Fe(3+). Zn(2+)-binding residues include histidine 73 and histidine 75. 3 residues coordinate 4-imidazolone-5-propanoate: arginine 82, tyrosine 145, and histidine 178. Residue tyrosine 145 participates in N-formimidoyl-L-glutamate binding. Histidine 243 provides a ligand contact to Fe(3+). Histidine 243 contacts Zn(2+). Residue glutamine 246 coordinates 4-imidazolone-5-propanoate. Aspartate 318 is a binding site for Fe(3+). Residue aspartate 318 participates in Zn(2+) binding. 2 residues coordinate N-formimidoyl-L-glutamate: asparagine 320 and glycine 322. Threonine 323 is a binding site for 4-imidazolone-5-propanoate.

Belongs to the metallo-dependent hydrolases superfamily. HutI family. The cofactor is Zn(2+). Requires Fe(3+) as cofactor.

It localises to the cytoplasm. The enzyme catalyses 4-imidazolone-5-propanoate + H2O = N-formimidoyl-L-glutamate. It functions in the pathway amino-acid degradation; L-histidine degradation into L-glutamate; N-formimidoyl-L-glutamate from L-histidine: step 3/3. Its function is as follows. Catalyzes the hydrolytic cleavage of the carbon-nitrogen bond in imidazolone-5-propanoate to yield N-formimidoyl-L-glutamate. It is the third step in the universal histidine degradation pathway. The sequence is that of Imidazolonepropionase from Serratia proteamaculans (strain 568).